The primary structure comprises 939 residues: Phosphoenolpyruvate carboxylase (939 aa).

Active-site residues include histidine 151 and lysine 593.

Belongs to the PEPCase type 1 family. It depends on Mg(2+) as a cofactor.

The catalysed reaction is oxaloacetate + phosphate = phosphoenolpyruvate + hydrogencarbonate. In terms of biological role, forms oxaloacetate, a four-carbon dicarboxylic acid source for the tricarboxylic acid cycle. The protein is Phosphoenolpyruvate carboxylase of Gloeobacter violaceus (strain ATCC 29082 / PCC 7421).